The sequence spans 279 residues: Urease accessory protein UreD (279 aa).

The protein belongs to the UreD family. As to quaternary structure, ureD, UreF and UreG form a complex that acts as a GTP-hydrolysis-dependent molecular chaperone, activating the urease apoprotein by helping to assemble the nickel containing metallocenter of UreC. The UreE protein probably delivers the nickel.

It is found in the cytoplasm. Its function is as follows. Required for maturation of urease via the functional incorporation of the urease nickel metallocenter. This is Urease accessory protein UreD from Streptococcus thermophilus (strain CNRZ 1066).